The chain runs to 564 residues: MASTSTTIRSHSSSRRGFSANSARLPGVSRSGFSSISVSRSRGSGGLGGACGGAGFGSRSLYGLGGSKRISIGGGSCAISGGYGSRAGGSYGFGGAGSGFGFGGGAGIGFGLGGGAGLAGGFGGPGFPVCPPGGIQEVTVNQSLLTPLNLQIDPAIQRVRAEEREQIKTLNNKFASFIDKVRFLEQQNKVLDTKWTLLQEQGTKTVRQNLEPLFEQYINNLRRQLDNIVGERGRLDSELRNMQDLVEDLKNKYEDEINKRTAAENEFVTLKKDVDAAYMNKVELQAKADTLTDEINFLRALYDAELSQMQTHISDTSVVLSMDNNRNLDLDSIIAEVKAQYEEIAQRSRAEAESWYQTKYEELQITAGRHGDDLRNTKQEIAEINRMIQRLRSEIDHVKKQCANLQAAIADAEQRGEMALKDAKNKLEGLEDALQKAKQDLARLLKEYQELMNVKLALDVEIATYRKLLEGEECRLNGEGVGQVNISVVQSTVSSGYGGASGVGSGLGLGGGSSYSYGSGLGVGGGFSSSSGRATGGGLSSVGGGSSTIKYTTTSSSSRKSYKH.

Residues methionine 1–histidine 11 are compositionally biased toward low complexity. The segment at methionine 1–alanine 23 is disordered. Alanine 2 carries the post-translational modification N-acetylalanine. The interval alanine 2–glutamate 162 is head. The segment at glutamate 163 to leucine 198 is coil 1A. The IF rod domain maps to glutamate 163–leucine 476. A linker 1 region spans residues glutamine 199 to tyrosine 217. Residues isoleucine 218–methionine 309 are coil 1B. A linker 12 region spans residues glutamine 310–isoleucine 333. A coil 2 region spans residues isoleucine 334–glutamate 472. Residues glutamate 473 to histidine 564 form a tail region. The tract at residues arginine 533–histidine 564 is disordered. Positions alanine 534–serine 546 are enriched in gly residues. A compositionally biased stretch (low complexity) spans serine 547–histidine 564.

Belongs to the intermediate filament family. As to quaternary structure, heterodimer of a type I and a type II keratin. KRT6 isomers associate with KRT16 and/or KRT17. Constitutively expressed in distinct types of epithelia such as those in oral mucosa, esophagus, papillae of tongue and hair follicle outer root sheath.

The polypeptide is Keratin, type II cytoskeletal 6B (KRT6B) (Homo sapiens (Human)).